The chain runs to 99 residues: Protein Tat (99 aa).

The disordered stretch occupies residues 1-20 (MEPVDPNIEPWNQPGSQPKT). Residues 1-24 (MEPVDPNIEPWNQPGSQPKTACNQ) are interaction with human CREBBP. Residues 1-48 (MEPVDPNIEPWNQPGSQPKTACNQCYCKKCCYHCQLCFLQKGLGICYG) form a transactivation region. C22, C25, and C27 together coordinate Zn(2+). Positions 22–37 (CNQCYCKKCCYHCQLC) are cysteine-rich. Residue K28 is modified to N6-acetyllysine; by host PCAF. C30, H33, C34, and C37 together coordinate Zn(2+). Residues 38-48 (FLQKGLGICYG) form a core region. The short motif at 49 to 57 (REKRRQRTT) is the Nuclear localization signal, RNA-binding (TAR), and protein transduction element. The segment at 49-86 (REKRRQRTTTPYASKNHKDPIPKQPLPQARGDPTGPKE) is interaction with the host capping enzyme RNGTT. K51 is modified (N6-acetyllysine; by host EP300 and GCN5L2). Asymmetric dimethylarginine; by host PRMT6 occurs at positions 52 and 53. Positions 54 to 99 (QRTTTPYASKNHKDPIPKQPLPQARGDPTGPKESKKEVESKTKTDP) are disordered. K71 is covalently cross-linked (Glycyl lysine isopeptide (Lys-Gly) (interchain with G-Cter in ubiquitin)). The short motif at 78–80 (RGD) is the Cell attachment site element. Residues 83 to 99 (GPKESKKEVESKTKTDP) show a composition bias toward basic and acidic residues.

Belongs to the lentiviruses Tat family. As to quaternary structure, interacts with host CCNT1. Associates with the P-TEFb complex composed at least of Tat, P-TEFb (CDK9 and CCNT1), TAR RNA, RNA Pol II. Recruits the HATs CREBBP, TAF1/TFIID, EP300, PCAF and GCN5L2. Interacts with host KAT5/Tip60; this interaction targets the latter to degradation. Interacts with the host deacetylase SIRT1. Interacts with host capping enzyme RNGTT; this interaction stimulates RNGTT. Binds to host KDR, and to the host integrins ITGAV/ITGB3 and ITGA5/ITGB1. Interacts with host KPNB1/importin beta-1 without previous binding to KPNA1/importin alpha-1. Interacts with EIF2AK2. Interacts with host nucleosome assembly protein NAP1L1; this interaction may be required for the transport of Tat within the nucleus, since the two proteins interact at the nuclear rim. Interacts with host C1QBP/SF2P32; this interaction involves lysine-acetylated Tat. Interacts with the host chemokine receptors CCR2, CCR3 and CXCR4. Interacts with host DPP4/CD26; this interaction may trigger an anti-proliferative effect. Interacts with host LDLR. Interacts with the host extracellular matrix metalloproteinase MMP1. Interacts with host PRMT6; this interaction mediates Tat's methylation. Interacts with, and is ubiquitinated by MDM2/Hdm2. Interacts with host PSMC3 and HTATIP2. Interacts with STAB1; this interaction may overcome SATB1-mediated repression of IL2 and IL2RA (interleukin) in T cells by binding to the same domain than HDAC1. Interacts (when acetylated) with human CDK13, thereby increasing HIV-1 mRNA splicing and promoting the production of the doubly spliced HIV-1 protein Nef. Interacts with host TBP; this interaction modulates the activity of transcriptional pre-initiation complex. Interacts with host RELA. Interacts with host PLSCR1; this interaction negatively regulates Tat transactivation activity by altering its subcellular distribution. Asymmetrical arginine methylation by host PRMT6 seems to diminish the transactivation capacity of Tat and affects the interaction with host CCNT1. In terms of processing, acetylation by EP300, CREBBP, GCN5L2/GCN5 and PCAF regulates the transactivation activity of Tat. EP300-mediated acetylation of Lys-50 promotes dissociation of Tat from the TAR RNA through the competitive binding to PCAF's bromodomain. In addition, the non-acetylated Tat's N-terminus can also interact with PCAF. PCAF-mediated acetylation of Lys-28 enhances Tat's binding to CCNT1. Lys-50 is deacetylated by SIRT1. Post-translationally, polyubiquitination by host MDM2 does not target Tat to degradation, but activates its transactivation function and fosters interaction with CCNT1 and TAR RNA. Phosphorylated by EIF2AK2 on serine and threonine residues adjacent to the basic region important for TAR RNA binding and function. Phosphorylation of Tat by EIF2AK2 is dependent on the prior activation of EIF2AK2 by dsRNA.

It is found in the host nucleus. It localises to the host nucleolus. Its subcellular location is the host cytoplasm. The protein localises to the secreted. Functionally, transcriptional activator that increases RNA Pol II processivity, thereby increasing the level of full-length viral transcripts. Recognizes a hairpin structure at the 5'-LTR of the nascent viral mRNAs referred to as the transactivation responsive RNA element (TAR) and recruits the cyclin T1-CDK9 complex (P-TEFb complex) that will in turn hyperphosphorylate the RNA polymerase II to allow efficient elongation. The CDK9 component of P-TEFb and other Tat-activated kinases hyperphosphorylate the C-terminus of RNA Pol II that becomes stabilized and much more processive. Other factors such as HTATSF1/Tat-SF1, SUPT5H/SPT5, and HTATIP2 are also important for Tat's function. Besides its effect on RNA Pol II processivity, Tat induces chromatin remodeling of proviral genes by recruiting the histone acetyltransferases (HATs) CREBBP, EP300 and PCAF to the chromatin. This also contributes to the increase in proviral transcription rate, especially when the provirus integrates in transcriptionally silent region of the host genome. To ensure maximal activation of the LTR, Tat mediates nuclear translocation of NF-kappa-B by interacting with host RELA. Through its interaction with host TBP, Tat may also modulate transcription initiation. Tat can reactivate a latently infected cell by penetrating in it and transactivating its LTR promoter. In the cytoplasm, Tat is thought to act as a translational activator of HIV-1 mRNAs. In terms of biological role, extracellular circulating Tat can be endocytosed by surrounding uninfected cells via the binding to several surface receptors such as CD26, CXCR4, heparan sulfate proteoglycans (HSPG) or LDLR. Neurons are rarely infected, but they internalize Tat via their LDLR. Through its interaction with nuclear HATs, Tat is potentially able to control the acetylation-dependent cellular gene expression. Modulates the expression of many cellular genes involved in cell survival, proliferation or in coding for cytokines or cytokine receptors. Tat plays a role in T-cell and neurons apoptosis. Tat induced neurotoxicity and apoptosis probably contribute to neuroAIDS. Circulating Tat also acts as a chemokine-like and/or growth factor-like molecule that binds to specific receptors on the surface of the cells, affecting many cellular pathways. In the vascular system, Tat binds to ITGAV/ITGB3 and ITGA5/ITGB1 integrins dimers at the surface of endothelial cells and competes with bFGF for heparin-binding sites, leading to an excess of soluble bFGF. In Homo sapiens (Human), this protein is Protein Tat.